A 432-amino-acid polypeptide reads, in one-letter code: Phosphomethylpyrimidine synthase (432 aa).

Substrate contacts are provided by residues Asn-66, Met-95, Tyr-124, His-163, 185 to 187 (SRG), 226 to 229 (DGLR), and Glu-265. His-269 is a binding site for Zn(2+). Tyr-292 provides a ligand contact to substrate. Residue His-333 participates in Zn(2+) binding. [4Fe-4S] cluster is bound by residues Cys-409, Cys-412, and Cys-416.

The protein belongs to the ThiC family. [4Fe-4S] cluster serves as cofactor.

The enzyme catalyses 5-amino-1-(5-phospho-beta-D-ribosyl)imidazole + S-adenosyl-L-methionine = 4-amino-2-methyl-5-(phosphooxymethyl)pyrimidine + CO + 5'-deoxyadenosine + formate + L-methionine + 3 H(+). It functions in the pathway cofactor biosynthesis; thiamine diphosphate biosynthesis. Catalyzes the synthesis of the hydroxymethylpyrimidine phosphate (HMP-P) moiety of thiamine from aminoimidazole ribotide (AIR) in a radical S-adenosyl-L-methionine (SAM)-dependent reaction. The polypeptide is Phosphomethylpyrimidine synthase (Moorella thermoacetica (strain ATCC 39073 / JCM 9320)).